The primary structure comprises 372 residues: MIIHTLELSSYRNYSKTAVVFGEKINVFVGENAQGKTNLLEAIYVVALAKSHRTQKDKEMIGFEEPFARIHAKAEKRTGEVELDIILSAKGKKGKINGLEQRRLSDYVGTLNVVMFAPEDLDLVKGSPQVRRRFIDMELGQISPVYLNSLSLYGKILKQRNVLLKNMQQKRSQNYAMVDVLTEQLIDKAAFVMKKRAEFISRLEEWATPIHQSISRGKEMLTLSYIPSIEVSDIENMSKIKEDLYKAYETKRETEVRRGTTLFGPHRDDVSFSVNGLDVQSYGSQGQQRTTALSVKLAEIDLIYAEIGDYPILLLDDVLSELDNYRQSHLLEAIQARVQTFVTTTSTSGLDDSVLAEACLFSVDQGTVKRLE.

Residue 30–37 (GENAQGKT) participates in ATP binding.

It belongs to the RecF family.

It is found in the cytoplasm. In terms of biological role, the RecF protein is involved in DNA metabolism; it is required for DNA replication and normal SOS inducibility. RecF binds preferentially to single-stranded, linear DNA. It also seems to bind ATP. This chain is DNA replication and repair protein RecF, found in Shouchella clausii (strain KSM-K16) (Alkalihalobacillus clausii).